The chain runs to 313 residues: Adhesin MafA 2 (313 aa).

Positions 1–14 (MKTLLLLIPLVLTA) are cleaved as a signal peptide. The N-palmitoyl cysteine moiety is linked to residue Cys15. Cys15 is lipidated: S-diacylglycerol cysteine. Positions 282–297 (GDTTAQNRPDFKQNNG) are enriched in polar residues. Residues 282–313 (GDTTAQNRPDFKQNNGKKPDVGNEVIRRRKGG) form a disordered region.

It belongs to the MafA family.

Its subcellular location is the cell outer membrane. The protein is Adhesin MafA 2 (mafA2) of Neisseria meningitidis serogroup A / serotype 4A (strain DSM 15465 / Z2491).